Reading from the N-terminus, the 490-residue chain is Cell division cycle protein cdt2 (490 aa).

The segment at 18-40 (ITSRANNSLPPTPDSSPAAPSKK) is disordered. 6 WD repeats span residues 178-208 (AHNN…KVFD), 226-257 (YHSH…IFWD), 285-317 (GRDC…KLWD), 339-369 (KRDF…YEYS), 387-419 (RISS…GVVV), and 435-464 (GHTK…RVWN).

It belongs to the WD repeat cdt2 family. In terms of assembly, component of the DCX(DTL) E3 ubiquitin ligase complex, at least composed of cul4, ddb1, cdt2 and pip1.

The protein localises to the nucleus. The protein operates within protein modification; protein ubiquitination. Its function is as follows. Substrate-specific adapter of a DCX (DDB1-CUL4-X-box) E3 ubiquitin-protein ligase complex required for DNA replication during mitosis and meiosis. The DCX(DTL) complex, also named CRL4(CDT2) complex, mediates the polyubiquitination and subsequent degradation of cdt1 and spd1. Involved in the regulation of mitotic and pre-meiotic S-phase progression. The chain is Cell division cycle protein cdt2 (cdt2) from Schizosaccharomyces pombe (strain 972 / ATCC 24843) (Fission yeast).